The chain runs to 210 residues: High-affinity nitrate transporter 3.1 (210 aa).

The signal sequence occupies residues 1-22; the sequence is MAIQKILFASLLICSLIQSIHG. Residues 178–198 form a helical membrane-spanning segment; the sequence is LDIASICFSVFSVVALVVFFV.

The protein belongs to the NAR2 family. Heterotetramer composed of two NRT2.1 and two NRT3.1. Interacts with NRT2.1 and NRT2.3. Interacts with all other NRT2 transporters, including NRT2.5. Highly expressed in roots. Detected in shoots.

Its subcellular location is the cell membrane. In terms of biological role, acts as a dual component transporter with NTR2.1. Required for high-affinity nitrate transport. Acts as a repressor of lateral root initiation. May be involved in targeting NRT2 proteins to the plasma membrane. The polypeptide is High-affinity nitrate transporter 3.1 (NRT3.1) (Arabidopsis thaliana (Mouse-ear cress)).